Reading from the N-terminus, the 562-residue chain is Probable sesquiterpene synthase (562 aa).

Residues aspartate 315, aspartate 319, and glutamate 467 each coordinate Mg(2+). Positions 315–319 match the DDXXD motif motif; that stretch reads DDIYD.

It belongs to the terpene synthase family. Tpsa subfamily. The cofactor is Mg(2+). Requires Mn(2+) as cofactor.

In terms of biological role, sesquiterpene synthase. The sequence is that of Probable sesquiterpene synthase (STPS) from Santalum murrayanum (Bitter quandong).